The sequence spans 961 residues: RNA polymerase II subunit A C-terminal domain phosphatase (961 aa).

An N-acetylmethionine modification is found at methionine 1. One can recognise an FCP1 homology domain in the interval 178-344; the sequence is HRNRKLVLMV…SRESQTRKKV (167 aa). The disordered stretch occupies residues 328–589; it reads DMNAPPGSRE…EEEDTDEDDH (262 aa). A compositionally biased stretch (basic and acidic residues) spans 394 to 406; the sequence is DSPRPGKPDERDI. Phosphoserine is present on serine 395. Residues 450–462 are compositionally biased toward acidic residues; that stretch reads LDFDLSSDSESSS. Residues 463 to 475 are compositionally biased toward low complexity; it reads ESEGTKSSSSASD. Residues 575-588 are compositionally biased toward acidic residues; sequence SMEEEEEEDTDEDD. Positions 629–728 constitute a BRCT domain; the sequence is LKSKVLADVA…DKVEEQLFPL (100 aa). A phosphoserine mark is found at serine 674 and serine 740. 2 disordered regions span residues 730–752 and 780–949; these read DDHT…GVPP and KLIR…ADEM. Position 780 is an N6-acetyllysine (lysine 780). The span at 793–803 shows a compositional bias: polar residues; that stretch reads SSSLPIRQEPS. Residue serine 839 is modified to Phosphoserine. The span at 850-859 shows a compositional bias: basic and acidic residues; it reads CKEDLESMDK. Composition is skewed to acidic residues over residues 860 to 873 and 937 to 947; these read EVDD…DDSD and NEDEGSSSEAD. 2 positions are modified to phosphoserine: serine 869 and serine 872.

As to quaternary structure, homodimer. Interacts with GTF2F1. Interacts with WDR77, SNRPB and SNRNP70. Post-translationally, phosphorylated. In the presence of TFIIF, the phosphorylated form has an increased CTD phosphatase activity. The phosphorylation is required for the physical interaction with GTF2F1. Ubiquitously expressed.

It is found in the nucleus. The protein resides in the cytoplasm. Its subcellular location is the cytoskeleton. The protein localises to the microtubule organizing center. It localises to the centrosome. It is found in the spindle pole. The protein resides in the midbody. It carries out the reaction O-phospho-L-seryl-[protein] + H2O = L-seryl-[protein] + phosphate. The catalysed reaction is O-phospho-L-threonyl-[protein] + H2O = L-threonyl-[protein] + phosphate. In terms of biological role, processively dephosphorylates 'Ser-2' and 'Ser-5' of the heptad repeats YSPTSPS in the C-terminal domain of the largest RNA polymerase II subunit. This promotes the activity of RNA polymerase II. Plays a role in the exit from mitosis by dephosphorylating crucial mitotic substrates (USP44, CDC20 and WEE1) that are required for M-phase-promoting factor (MPF)/CDK1 inactivation. This is RNA polymerase II subunit A C-terminal domain phosphatase (CTDP1) from Homo sapiens (Human).